A 79-amino-acid polypeptide reads, in one-letter code: Delta-hormotoxin-Cpt1a (79 aa).

The N-terminal stretch at M1–S20 is a signal peptide. Positions R21–A31 are excised as a propeptide. 3 disulfides stabilise this stretch: C36/C75, C38/C66, and C56/C76.

The protein belongs to the sea anemone sodium channel inhibitory toxin family.

Its subcellular location is the secreted. It localises to the nematocyst. In neuromuscular preparation of crustaceans, the toxin increased neurotransmitter release, causing repetitive firing of the axons. May affect sodium channels (Nav). This is Delta-hormotoxin-Cpt1a from Calliactis parasitica (Sea anemone).